We begin with the raw amino-acid sequence, 348 residues long: tRNA N6-adenosine threonylcarbamoyltransferase (348 aa).

Fe cation is bound by residues His-115 and His-119. Substrate-binding positions include 138-142 (LVSGG), Asp-171, Gly-184, and Asn-276. Asp-304 contributes to the Fe cation binding site.

The protein belongs to the KAE1 / TsaD family. The cofactor is Fe(2+).

Its subcellular location is the cytoplasm. It carries out the reaction L-threonylcarbamoyladenylate + adenosine(37) in tRNA = N(6)-L-threonylcarbamoyladenosine(37) in tRNA + AMP + H(+). Functionally, required for the formation of a threonylcarbamoyl group on adenosine at position 37 (t(6)A37) in tRNAs that read codons beginning with adenine. Is involved in the transfer of the threonylcarbamoyl moiety of threonylcarbamoyl-AMP (TC-AMP) to the N6 group of A37, together with TsaE and TsaB. TsaD likely plays a direct catalytic role in this reaction. The chain is tRNA N6-adenosine threonylcarbamoyltransferase from Xylella fastidiosa (strain 9a5c).